The following is a 779-amino-acid chain: Phosphatidylinositol 4-phosphate 5-kinase 4 (779 aa).

The segment at 20–61 (QQAKKRANSIFGTVSVAPQTDDDATTTTEENDDETSTNRSSI) is disordered. Over residues 39–54 (TDDDATTTTEENDDET) the composition is skewed to acidic residues. 8 MORN repeats span residues 77-99 (YTGQ…DGCM), 100-122 (YIGD…SGAT), 123-145 (YEGE…SGDT), 146-168 (YKGQ…NGDV), 169-191 (YDGE…DGSY), 192-214 (YMGE…DGNR), 215-237 (YDGF…DGSF), and 238-259 (YVGH…SGDD). Residues 382 to 775 (TISKGHRNYE…RFRDFIFKVF (394 aa)) enclose the PIPK domain. The activation loop stretch occupies residues 735–756 (YDISKKLEHAYKSIQYDPTSIS).

The catalysed reaction is a 1,2-diacyl-sn-glycero-3-phospho-(1D-myo-inositol 4-phosphate) + ATP = a 1,2-diacyl-sn-glycero-3-phospho-(1D-myo-inositol-4,5-bisphosphate) + ADP + H(+). This chain is Phosphatidylinositol 4-phosphate 5-kinase 4 (PIP5K4), found in Arabidopsis thaliana (Mouse-ear cress).